A 485-amino-acid polypeptide reads, in one-letter code: Cobyric acid synthase (485 aa).

Residues 249 to 437 (HLKIRVPVWQ…WHGLFSQPSA (189 aa)) form the GATase cobBQ-type domain. The Nucleophile role is filled by cysteine 330. The active site involves histidine 429.

It belongs to the CobB/CobQ family. CobQ subfamily.

It participates in cofactor biosynthesis; adenosylcobalamin biosynthesis. In terms of biological role, catalyzes amidations at positions B, D, E, and G on adenosylcobyrinic A,C-diamide. NH(2) groups are provided by glutamine, and one molecule of ATP is hydrogenolyzed for each amidation. The protein is Cobyric acid synthase of Saccharophagus degradans (strain 2-40 / ATCC 43961 / DSM 17024).